The primary structure comprises 416 residues: Alpha-1-antiproteinase (416 aa).

The signal sequence occupies residues 1-24 (MALSITRGLLLLAALCCLAPTSLA). Asn68, Asn105, Asn143, and Asn269 each carry an N-linked (GlcNAc...) asparagine glycan. The interval 371 to 390 (GATFLEAIPMSLPPDVEFNR) is RCL. Phosphoserine is present on Ser381.

The protein belongs to the serpin family. As to quaternary structure, interacts with CELA2A. Interacts with ERGIC3 and LMAN1/ERGIC53. Interacts with PRSS1/Trypsin. In terms of tissue distribution, plasma.

The protein resides in the secreted. In terms of biological role, inhibits human leukocyte elastase, pig pancreatic elastase and bovine trypsin on a 1:1 molar basis. The polypeptide is Alpha-1-antiproteinase (Ovis aries (Sheep)).